The chain runs to 558 residues: FRIGIDA-like protein 3 (558 aa).

Positions 9–102 (SLMDSTSSKI…ALERLQKKRD (94 aa)) form a coiled coil. The span at 454-463 (AKADKKRATE) shows a compositional bias: basic and acidic residues. The interval 454–494 (AKADKKRATEPMKPQPKRPRGAQPRVTDNNNNINNNKTGYG) is disordered.

The protein belongs to the Frigida family.

This Arabidopsis thaliana (Mouse-ear cress) protein is FRIGIDA-like protein 3 (FRL3).